A 306-amino-acid chain; its full sequence is Low-density lipoprotein receptor class A domain-containing protein 4 (306 aa).

Over 1–64 (MPEAGFQATN…PPGIFNSELE (64 aa)) the chain is Lumenal. The LDL-receptor class A domain maps to 16–48 (KFTCTSGKCLYLGSLVCNQQNDCGDNSDEENCL). Cystine bridges form between C19–C38 and C32–C47. The chain crosses the membrane as a helical span at residues 65-85 (FAQIIIIVVVVTVMVVVIVCL). Topologically, residues 86-306 (LNHYKVSTRS…GKDRKPGNLV (221 aa)) are cytoplasmic. Positions 180–183 (PPPY) match the PPxY motif 1 motif. An SMAD interaction motif (SIM) motif is present at residues 208 to 211 (PPNR). Positions 252-255 (PPTY) match the PPxY motif 2 motif. A disordered region spans residues 286-306 (NNAESTIVPIKGKDRKPGNLV). Residues 296 to 306 (KGKDRKPGNLV) are compositionally biased toward basic and acidic residues.

The protein belongs to the PMEPA1 family. As to quaternary structure, interacts with PMEPA1. Interacts (via the SMAD interaction motif) with SMAD2 and SMAD3. As to expression, expressed in lymphocytes.

The protein resides in the early endosome membrane. Functionally, functions as a negative regulator of TGF-beta signaling and thereby probably plays a role in cell proliferation, differentiation, apoptosis, motility, extracellular matrix production and immunosuppression. In the canonical TGF-beta pathway, ZFYVE9/SARA recruits the intracellular signal transducer and transcriptional modulators SMAD2 and SMAD3 to the TGF-beta receptor. Phosphorylated by the receptor, SMAD2 and SMAD3 then form a heteromeric complex with SMAD4 that translocates to the nucleus to regulate transcription. Through interaction with SMAD2 and SMAD3, LDLRAD4 may compete with ZFYVE9 and SMAD4 and prevent propagation of the intracellular signal. The polypeptide is Low-density lipoprotein receptor class A domain-containing protein 4 (LDLRAD4) (Homo sapiens (Human)).